The chain runs to 142 residues: Pleckstrin homology-like domain family A member 2 (142 aa).

Position 3 is a phosphoserine (Ser3). The 93-residue stretch at 7–99 (VLREGELEKR…WNASITLALI (93 aa)) folds into the PH domain.

Belongs to the PHLDA2 family.

It localises to the cytoplasm. The protein resides in the membrane. Its function is as follows. Plays a role in regulating placenta growth. May act via its PH domain that competes with other PH domain-containing proteins, thereby preventing their binding to membrane lipids. The sequence is that of Pleckstrin homology-like domain family A member 2 (PHLDA2) from Bos taurus (Bovine).